The following is a 397-amino-acid chain: Acetate kinase (397 aa).

Asn-8 contributes to the Mg(2+) binding site. Lys-15 is an ATP binding site. Arg-89 provides a ligand contact to substrate. Residue Asp-146 is the Proton donor/acceptor of the active site. ATP-binding positions include 206 to 210 (HLGNG), 281 to 283 (DLR), and 329 to 333 (GVGEN). A Mg(2+)-binding site is contributed by Glu-382.

The protein belongs to the acetokinase family. Homodimer. Requires Mg(2+) as cofactor. The cofactor is Mn(2+).

Its subcellular location is the cytoplasm. The enzyme catalyses acetate + ATP = acetyl phosphate + ADP. It participates in metabolic intermediate biosynthesis; acetyl-CoA biosynthesis; acetyl-CoA from acetate: step 1/2. Catalyzes the formation of acetyl phosphate from acetate and ATP. Can also catalyze the reverse reaction. This is Acetate kinase from Bacillus cereus (strain ATCC 14579 / DSM 31 / CCUG 7414 / JCM 2152 / NBRC 15305 / NCIMB 9373 / NCTC 2599 / NRRL B-3711).